The primary structure comprises 91 residues: Small ribosomal subunit protein uS19 (91 aa).

Belongs to the universal ribosomal protein uS19 family.

Protein S19 forms a complex with S13 that binds strongly to the 16S ribosomal RNA. The chain is Small ribosomal subunit protein uS19 from Synechococcus elongatus (strain ATCC 33912 / PCC 7942 / FACHB-805) (Anacystis nidulans R2).